We begin with the raw amino-acid sequence, 410 residues long: MLKGEKVVLAYSGGLDTSVIIPWLKENYECEIIAACINVGQGEELKYIKDKALASGASKVYIEDVKEEFVKDYIFPTLKAGAVYEGKYLLGTSMARPLIAKKLVEIAHKEGAKAIAHGATGKGNDQVRFEVSIHALDPSIKIIAPWRIWDLKSREDEIDYAKKKGIPIPATYEKIYSVDNNLWHVSHEGGDLEDPWNEPKSDLYDIITPPDKAPDKPEYVLIEFEKGIPVKVNGKALEPVKLIEELNAIAGRNGVGIADLVENRLVGMKSRGVYETPAGTLLYAAHKELEYLVLDKETMRFKDLVSQKYADLVYNGLWFSPLKAALDAFVEETQKNVTGVVRLKLYKGNVINAGVKSPYSLYNQEFVTFGKDEVYNQKDAEGFINLFGLSLKIKALMEMERKDMDEAVGR.

Alanine 10–serine 18 contacts ATP. L-citrulline contacts are provided by tyrosine 88 and serine 93. Glycine 118 is an ATP binding site. Positions 120, 124, and 125 each coordinate L-aspartate. Asparagine 124 provides a ligand contact to L-citrulline. The L-citrulline site is built by arginine 128, serine 177, serine 186, glutamate 262, and tyrosine 274.

This sequence belongs to the argininosuccinate synthase family. Type 1 subfamily. Homotetramer.

Its subcellular location is the cytoplasm. It catalyses the reaction L-citrulline + L-aspartate + ATP = 2-(N(omega)-L-arginino)succinate + AMP + diphosphate + H(+). It functions in the pathway amino-acid biosynthesis; L-arginine biosynthesis; L-arginine from L-ornithine and carbamoyl phosphate: step 2/3. This chain is Argininosuccinate synthase, found in Thermoanaerobacter pseudethanolicus (strain ATCC 33223 / 39E) (Clostridium thermohydrosulfuricum).